We begin with the raw amino-acid sequence, 160 residues long: Small ribosomal subunit protein uS7 (160 aa).

This sequence belongs to the universal ribosomal protein uS7 family. Part of the 30S ribosomal subunit. Contacts proteins S9 and S11.

One of the primary rRNA binding proteins, it binds directly to 16S rRNA where it nucleates assembly of the head domain of the 30S subunit. Is located at the subunit interface close to the decoding center, probably blocks exit of the E-site tRNA. The chain is Small ribosomal subunit protein uS7 from Rickettsia massiliae (strain Mtu5).